The primary structure comprises 1121 residues: Cuscuta receptor 1 (1121 aa).

The first 20 residues, 1–20 (MGNIKFLLLVFFLIVVVVNG), serve as a signal peptide directing secretion. The Extracellular segment spans residues 21 to 1058 (CWEEERNALL…EESSELEDIQ (1038 aa)). N-linked (GlcNAc...) asparagine glycosylation occurs at asparagine 91. LRR repeat units lie at residues 98 to 122 (FKSL…GFSK), 126 to 152 (LPNL…CWIS), 185 to 209 (LSNL…ALGE), 210 to 233 (LRNL…SLKI), 234 to 259 (FPSL…IIDL), 260 to 282 (SNLE…KGNK), 284 to 308 (MTSL…SLKS), and 309 to 331 (FSSL…IYAL). A glycan (N-linked (GlcNAc...) asparagine) is linked at asparagine 224. Residues asparagine 298, asparagine 321, and asparagine 333 are each glycosylated (N-linked (GlcNAc...) asparagine). An LRR 9 repeat occupies 334-360 (LSTVEYLYFKGSSLNDNFLPNIGQMTS). Asparagine 372 and asparagine 406 each carry an N-linked (GlcNAc...) asparagine glycan. LRR repeat units lie at residues 383 to 406 (LKYI…CLGN), 407 to 432 (LTSL…IWRR), 433 to 457 (LTSL…QFSD), 459 to 479 (KKLI…EYQN), 507 to 531 (QYDL…LLEN), 556 to 580 (HLHL…MSLA), 581 to 605 (FPKL…ISGI), 607 to 628 (LTIL…LAVV), 630 to 654 (SPQL…EFRP), 655 to 678 (HVLS…VFLS), 680 to 701 (LITL…TRDN), 702 to 725 (RRLL…ICNL), 726 to 749 (KIIN…VSSL), 751 to 772 (LKHI…IFNF), 773 to 796 (SSLI…IGSL), 797 to 820 (SNLN…ICML), 822 to 846 (NLSI…YLTQ), 914 to 938 (LKYM…LGNM), 939 to 961 (SNIH…TFSN), 962 to 986 (LQEI…LLEL), and 988 to 1012 (SLAV…QFGT). N-linked (GlcNAc...) asparagine glycans are attached at residues asparagine 531, asparagine 576, and asparagine 588. Residue asparagine 689 is glycosylated (N-linked (GlcNAc...) asparagine). Asparagine 771 carries an N-linked (GlcNAc...) asparagine glycan. N-linked (GlcNAc...) asparagine glycosylation is found at asparagine 822, asparagine 937, asparagine 945, asparagine 976, asparagine 998, asparagine 1014, and asparagine 1041. A helical membrane pass occupies residues 1059-1079 (CFYIGFVVSFGAILLGLAAAL). The Cytoplasmic segment spans residues 1080 to 1121 (CLNRHWRRAWFRMIEALMFYCYYFVLDNIVTPIKSRWYKNVG).

Belongs to the RLP family. Interacts with an 11 kDa glycine-rich protein (GRP) of C.reflexa. Interacts with SOBIR1 and SOBIR1-like kinases; presence or absence of GRP has no effect on interaction.

It is found in the cell membrane. Its subcellular location is the cell surface. Involved in plant defense. Contributes to resistance against parasitic plant C.reflexa. Acts as a receptor for the 11 kDa glycine-rich protein (GRP) of C.reflexa inducing immune responses such as emission of stress-related phytohormone ethylene, reactive oxygen species (ROS) release, and hypersensitive cell death. Recognizes a specific pathogen-associated molecular pattern (PAMP), a cysteine-rich peptide 21 (crip21), from GRP located on the cell wall of C.reflexa. The protein is Cuscuta receptor 1 of Solanum lycopersicum (Tomato).